Here is a 329-residue protein sequence, read N- to C-terminus: Phospho-N-acetylmuramoyl-pentapeptide-transferase (329 aa).

Helical transmembrane passes span 1-21 (MLLNGIVAAVITMIITIIGIP), 53-73 (MGGFVFVVVSLVVSLVAALVF), 76-96 (FSPAFITAWWVFAMYAVIGFL), 109-129 (GLTAKQKMLAQILIGIVSYFI), 141-161 (ILSWQVNIGIFFSIFIIIWLV), 175-195 (GLASITVAISLTAYAVIAVVH), 198-218 (YDVLLIILSVIGGLLGFFVFN), 237-257 (FLAIVSILLHAEWTLLLIGAV), and 309-329 (IVFWLFTAVLSVIALCIYFAF).

This sequence belongs to the glycosyltransferase 4 family. MraY subfamily. It depends on Mg(2+) as a cofactor.

The protein resides in the cell membrane. The catalysed reaction is UDP-N-acetyl-alpha-D-muramoyl-L-alanyl-gamma-D-glutamyl-L-lysyl-D-alanyl-D-alanine + di-trans,octa-cis-undecaprenyl phosphate = Mur2Ac(oyl-L-Ala-gamma-D-Glu-L-Lys-D-Ala-D-Ala)-di-trans,octa-cis-undecaprenyl diphosphate + UMP. It participates in cell wall biogenesis; peptidoglycan biosynthesis. Catalyzes the initial step of the lipid cycle reactions in the biosynthesis of the cell wall peptidoglycan: transfers peptidoglycan precursor phospho-MurNAc-pentapeptide from UDP-MurNAc-pentapeptide onto the lipid carrier undecaprenyl phosphate, yielding undecaprenyl-pyrophosphoryl-MurNAc-pentapeptide, known as lipid I. This chain is Phospho-N-acetylmuramoyl-pentapeptide-transferase, found in Lactococcus lactis subsp. cremoris (strain MG1363).